We begin with the raw amino-acid sequence, 100 residues long: Urease subunit gamma (100 aa).

The protein belongs to the urease gamma subunit family. In terms of assembly, heterotrimer of UreA (gamma), UreB (beta) and UreC (alpha) subunits. Three heterotrimers associate to form the active enzyme.

The protein resides in the cytoplasm. It carries out the reaction urea + 2 H2O + H(+) = hydrogencarbonate + 2 NH4(+). It functions in the pathway nitrogen metabolism; urea degradation; CO(2) and NH(3) from urea (urease route): step 1/1. This is Urease subunit gamma from Polaromonas naphthalenivorans (strain CJ2).